The following is an 837-amino-acid chain: Protein translocase subunit SecA 1 (837 aa).

ATP contacts are provided by residues Gln-85, 103-107 (GEGKT), and Asp-492. Positions 791 to 837 (KGEAINPAEGKPEAKRQPIRKDQHIGRNDPCPCGSGKKYKNCHGKEA) are disordered. Residues 800-817 (GKPEAKRQPIRKDQHIGR) show a composition bias toward basic and acidic residues. Residues Cys-821, Cys-823, Cys-832, and His-833 each contribute to the Zn(2+) site. Positions 827-837 (KKYKNCHGKEA) are enriched in basic residues.

The protein belongs to the SecA family. Monomer and homodimer. Part of the essential Sec protein translocation apparatus which comprises SecA, SecYEG and auxiliary proteins SecDF. Other proteins may also be involved. It depends on Zn(2+) as a cofactor.

The protein localises to the cell membrane. The protein resides in the cytoplasm. It catalyses the reaction ATP + H2O + cellular proteinSide 1 = ADP + phosphate + cellular proteinSide 2.. Part of the Sec protein translocase complex. Interacts with the SecYEG preprotein conducting channel. Has a central role in coupling the hydrolysis of ATP to the transfer of proteins into and across the cell membrane, serving as an ATP-driven molecular motor driving the stepwise translocation of polypeptide chains across the membrane. The sequence is that of Protein translocase subunit SecA 1 from Listeria monocytogenes serovar 1/2a (strain ATCC BAA-679 / EGD-e).